Here is a 187-residue protein sequence, read N- to C-terminus: Urease accessory protein UreE (187 aa).

Residues 154–187 are disordered; sequence RANSAQGHGHSHGHSHSHDHHGYHHHGDGNWHKH. Positions 162 to 177 are enriched in basic residues; that stretch reads GHSHGHSHSHDHHGYH. Residues 178–187 show a composition bias toward basic and acidic residues; sequence HHGDGNWHKH.

It belongs to the UreE family.

The protein resides in the cytoplasm. Functionally, involved in urease metallocenter assembly. Binds nickel. Probably functions as a nickel donor during metallocenter assembly. This Actinobacillus pleuropneumoniae (Haemophilus pleuropneumoniae) protein is Urease accessory protein UreE.